We begin with the raw amino-acid sequence, 215 residues long: HTH-type transcriptional repressor FabR (215 aa).

The HTH tetR-type domain maps to 10–70 (KTRRSLVEAA…TMVDESGLML (61 aa)). Positions 33–52 (SLREVAREAGIAPTSFYRHF) form a DNA-binding region, H-T-H motif.

Homodimer.

Its subcellular location is the cytoplasm. Functionally, represses the transcription of fabB, involved in unsaturated fatty acid (UFA) biosynthesis. By controlling UFA production, FabR directly influences the physical properties of the membrane bilayer. This chain is HTH-type transcriptional repressor FabR, found in Escherichia coli O1:K1 / APEC.